Here is a 1283-residue protein sequence, read N- to C-terminus: Bifunctional dioxygenase (DOX)-epoxy alcohol synthase (EAS) (1283 aa).

Residues 1–64 (MAEHKNGVAT…LPKEMGDGSY (64 aa)) form a disordered region. Residues 130–476 (TNSFISQLWN…DGKFNDDELV (347 aa)) are fatty acid alpha-dioxygenase. His227 serves as a coordination point for heme b. Tyr405 is a catalytic residue. His408 contributes to the heme b binding site. Positions 684-1108 (INIIGYNAAK…WDDGCGTDLF (425 aa)) are epoxy alcohol synthase. Position 1035 (Cys1035) interacts with heme.

This sequence in the N-terminal section; belongs to the peroxidase family. In the C-terminal section; belongs to the cytochrome P450 family. As to quaternary structure, homotetramer. It depends on heme b as a cofactor. The cofactor is heme.

It carries out the reaction (9Z,12Z)-octadecadienoate + O2 = (8E,10R,12Z)-10-hydroperoxyoctadeca-8,12-dienoate. The enzyme catalyses (8E,10R,12Z)-10-hydroperoxyoctadeca-8,12-dienoate = (12S,13R)-epoxy-(10R)-hydroxy-(8E)-octadecenoate. The catalysed reaction is (9Z)-octadecenoate + O2 = (8R)-hydroperoxy-(9Z)-octadecenoate. Bifunctional dioxygenase (DOX)-epoxy alcohol synthase (EAS) that converts linoleic acid (18:2n-6) sequentially to 10(R)-hydroperoxy-8(E),12(Z)-octadecadienoic acid (10R-HPODE) and 10R-HPODE further to 12(13)-epoxy-10-hydroxy-8(E)-octa-decenoic acid as the end product. Linoleic acid is oxidized mainly to the R stereoisomer of 10-HPODE. The dioxygenase domain is also able to oygenate position C-8 of linoleic acid to produce 8(R)-hydroperoxy-8(E),12(Z)-octadecadienoic acid (8R-HPODE). The chain is Bifunctional dioxygenase (DOX)-epoxy alcohol synthase (EAS) from Fusarium oxysporum (strain Fo5176) (Fusarium vascular wilt).